A 943-amino-acid polypeptide reads, in one-letter code: Protein translocase subunit SecA (943 aa).

Residues Gln90, 108–112 (GEGKT), and Asp509 each bind ATP. The tract at residues 535 to 560 (PNNEHKPPIPKQRSSKSKGGFSSKVG) is disordered. The segment covering 551 to 560 (SKGGFSSKVG) has biased composition (low complexity).

Belongs to the SecA family. Monomer and homodimer. Part of the essential Sec protein translocation apparatus which comprises SecA, SecYEG and auxiliary proteins SecDF. Other proteins may also be involved.

Its subcellular location is the cell inner membrane. The protein localises to the cellular thylakoid membrane. It localises to the cytoplasm. The enzyme catalyses ATP + H2O + cellular proteinSide 1 = ADP + phosphate + cellular proteinSide 2.. Functionally, part of the Sec protein translocase complex. Interacts with the SecYEG preprotein conducting channel. Has a central role in coupling the hydrolysis of ATP to the transfer of proteins into and across the cell membrane, serving as an ATP-driven molecular motor driving the stepwise translocation of polypeptide chains across the membrane. Its function is as follows. Probably participates in protein translocation into and across both the cytoplasmic and thylakoid membranes in cyanobacterial cells. In Prochlorococcus marinus (strain MIT 9312), this protein is Protein translocase subunit SecA.